Reading from the N-terminus, the 472-residue chain is MAGGEAGVTLGQPHLSRQDLATLDVTKLTPLSHEIISRQATINIGTIGHVAHGKSTVVKAISGVHTVRFKNELERNITIKLGYANAKIYKLDDSSCPRPECYRSCGSSTPDEFPSDIPGIKGNFRLVRHVSFVDCPGHDILMATMLNGAAVMDAALLLIAGNESCPQPQTSEHLAAIEIMKLKHILILQNKIDLVKESQAKEQYEQILAFVQGTVAEGAPIIPISAQLKYNIEVVCEYIVKKIPVPLRDFTSEPRLIVIRSFDVNKPGCEVDDLKGGVAGGSILKGVLKVGQEIEVRPGIVSKDSEGKLMCKPIFSKIVSLFAEHNDLQYAAPGGLIGVGTKIDPTLCRADRMVGQVLGAVGALPEIFTELEISYFLLRRLLGVRTEGDKKAAKVQKLSKNEVLMVNIGSLSTGGRVSAVKADLGKIVLTNPVCTEVGEKIALSRRVEKHWRLIGWGQIRRGVTIKPTIDDE.

Ala2 is subject to N-acetylalanine. Position 16 is a phosphoserine (Ser16). The tr-type G domain maps to Gln39 to Leu247. Residues Gly48 to Ser55 form a G1 region. GTP is bound at residue Ala51 to Thr56. Residues Asn76–Lys80 form a G2 region. The G3 stretch occupies residues Asp134–Gly137. Residues Asn190–Asp193 and Ser225–Gln227 contribute to the GTP site. The tract at residues Asn190–Asp193 is G4. Positions Ser225–Gln227 are G5.

Belongs to the TRAFAC class translation factor GTPase superfamily. Classic translation factor GTPase family. EIF2G subfamily. In terms of assembly, eIF2 is a heterotrimer composed of an alpha (EIF2S1), a beta (EIF2S2) and a gamma (Eif2s3x and Eif2s3y) chain. eIF2 is member of the 43S pre-initiation complex (43S PIC). Widely expressed in males.

The catalysed reaction is GTP + H2O = GDP + phosphate + H(+). Functionally, member of the eIF2 complex that functions in the early steps of protein synthesis by forming a ternary complex with GTP and initiator tRNA. This complex binds to a 40S ribosomal subunit, followed by mRNA binding to form the 43S pre-initiation complex (43S PIC). Junction of the 60S ribosomal subunit to form the 80S initiation complex is preceded by hydrolysis of the GTP bound to eIF2 and release of an eIF2-GDP binary complex. In order for eIF2 to recycle and catalyze another round of initiation, the GDP bound to eIF2 must exchange with GTP by way of a reaction catalyzed by eIF-2B. Along with its paralog on chromosome X, may contribute to spermatogenesis up to the round spermatid stage. This is Eukaryotic translation initiation factor 2 subunit 3, Y-linked (Eif2s3y) from Rattus norvegicus (Rat).